A 253-amino-acid chain; its full sequence is Nurim homolog (253 aa).

Residues Met-1–Ala-2 lie on the Nuclear side of the membrane. The helical transmembrane segment at Thr-3–Phe-30 threads the bilayer. The Perinuclear space segment spans residues Leu-31 to Thr-56. Residues Ala-57 to Leu-78 traverse the membrane as a helical segment. The Nuclear portion of the chain corresponds to Lys-79–Glu-96. Residues Arg-97 to Lys-113 traverse the membrane as a helical segment. Residues Asn-114 to Ala-132 lie on the Perinuclear space side of the membrane. Residues Pro-133 to Leu-161 traverse the membrane as a helical segment. The Nuclear segment spans residues Leu-162–Leu-188. The chain crosses the membrane as a helical span at residues Tyr-189 to Thr-207. Over Asn-208–Asp-213 the chain is Perinuclear space. A helical transmembrane segment spans residues Arg-214 to Thr-231. Over Asp-232–Gln-253 the chain is Nuclear.

The protein belongs to the nurim family.

The protein localises to the nucleus inner membrane. The polypeptide is Nurim homolog (nrm) (Drosophila pseudoobscura pseudoobscura (Fruit fly)).